The primary structure comprises 74 residues: ATP synthase subunit 9, mitochondrial (74 aa).

2 helical membrane-spanning segments follow: residues 8-28 (MGAG…GNVF) and 50-70 (ILGF…AFLI).

It belongs to the ATPase C chain family. F-type ATPases have 2 components, CF(1) - the catalytic core - and CF(0) - the membrane proton channel. CF(1) has five subunits: alpha(3), beta(3), gamma(1), delta(1), epsilon(1). CF(0) has three main subunits: a, b and c.

The protein localises to the mitochondrion membrane. In terms of biological role, this protein is one of the chains of the nonenzymatic membrane component (F0) of mitochondrial ATPase. The polypeptide is ATP synthase subunit 9, mitochondrial (ATP9) (Solanum tuberosum (Potato)).